An 886-amino-acid chain; its full sequence is MLKNPFNNNSLINKYQSLINQINTLEDELKTLTDSELRATSFKLKKQYAESKNLESLIPKSFALTREASLRTLGLRHFDVQLIGGLVLNDKKIAEMKTGEGKTLVATLPAYLNALTEKGVHIVTVNDYLANRDQVSMGQIYRFLGLNTGLIQDGMPNFDRRENYKADITYVTNYEVTFDFLRDNMALNLKDVVLRPFNYCIIDEVDSILIDEAQTPLIISNNIQTPIEKYIVAAEITDYLELNTHYKVDEKNKNVILTEDGSKQIEQILSVQDLYDPRDPWIPYIINALKANALYFNNVHYIVQNNRIIIVDEFTGRIMADRRWGDGLHQAIEAKEKLPIRQKTETVAAITYQNFFLLYPKLSGMTGTGKTAETEFEKIYNLSVEQIPTERPTQRKDLPDLIYKDQFSKWNAVAQNCNQIAKIGQPILVGTTTVEKSEMLAQLLSEYKLSYQILNAKPENVRRESEIVAQAGKKGSITIATNMAGRGTDIILGGNINFKIQKKLYDILTLVKNFKRSKKENIFSSSLLSQFEGSSQKFLSVLVSLSNDQKFLKLSDLDILKILRENDCISIPITSYQCSIRYLIDELITYNKKHQEQENQIVKNLGGLYIIGTERNDSRRVDNQLRGRCGRQGDPGTSRFFLSLDDNLLRLFGGSKIQNFMQTQIPDDSPLESEFITKSLDSAQERVEERAYQQRKNLFDYDDVLNKQRNIVYHERRNILESISVQKNIFAYGEQIITELLIELKEDKSCNIEATNLIENLFGRNLVLNYIKTSSLSISNLDLSELKIYLFNEFWLTYQSKITELSIYGEGIIENLERSIILINTDRIWREHLQKMTLLREAVGWRGYGQRNPLYEYKQDAFYMFETREELLRHLVIYDLLRSSIL.

Residues Gln81, 99-103 (GEGKT), and Asp489 each bind ATP.

Belongs to the SecA family.

It is found in the plastid. Its subcellular location is the chloroplast stroma. The protein localises to the chloroplast thylakoid membrane. The enzyme catalyses ATP + H2O + cellular proteinSide 1 = ADP + phosphate + cellular proteinSide 2.. Its function is as follows. Has a central role in coupling the hydrolysis of ATP to the transfer of proteins across the thylakoid membrane. The sequence is that of Protein translocase subunit SecA from Phaeodactylum tricornutum (strain CCAP 1055/1).